A 122-amino-acid chain; its full sequence is Fluoride-specific ion channel FluC (122 aa).

A run of 4 helical transmembrane segments spans residues 6-26, 33-53, 60-80, and 101-121; these read LVVG…INLV, SISF…GLLF, GLSP…FTTF, and LNII…FLIF. The Na(+) site is built by Gly-75 and Thr-78.

Belongs to the fluoride channel Fluc/FEX (TC 1.A.43) family.

It is found in the cell inner membrane. It catalyses the reaction fluoride(in) = fluoride(out). Na(+) is not transported, but it plays an essential structural role and its presence is essential for fluoride channel function. In terms of biological role, fluoride-specific ion channel. Important for reducing fluoride concentration in the cell, thus reducing its toxicity. This is Fluoride-specific ion channel FluC from Campylobacter jejuni subsp. jejuni serotype O:2 (strain ATCC 700819 / NCTC 11168).